Consider the following 126-residue polypeptide: Large ribosomal subunit protein uL22 (126 aa).

It belongs to the universal ribosomal protein uL22 family. As to quaternary structure, part of the 50S ribosomal subunit.

Its function is as follows. This protein binds specifically to 23S rRNA; its binding is stimulated by other ribosomal proteins, e.g. L4, L17, and L20. It is important during the early stages of 50S assembly. It makes multiple contacts with different domains of the 23S rRNA in the assembled 50S subunit and ribosome. Functionally, the globular domain of the protein is located near the polypeptide exit tunnel on the outside of the subunit, while an extended beta-hairpin is found that lines the wall of the exit tunnel in the center of the 70S ribosome. This chain is Large ribosomal subunit protein uL22, found in Sphingopyxis alaskensis (strain DSM 13593 / LMG 18877 / RB2256) (Sphingomonas alaskensis).